A 967-amino-acid polypeptide reads, in one-letter code: MFNRFNKLQAALALVLYSQSALGQYYTNSSSIASNSSTAVSSTSSGSVSISSSIELTSSTSDVSSSLTELTSSSTEVSSSIAPSTSSSEVSSSITSSGSSVSGSSSITSSGSSVSSSSSATESGSSASGSSSATESGSSVSGSSTSITSGSSSATESGSSVSGSTSATESGSSASGSSSATESGSSASGSSSATESGSSVSGSSSATESGSSVSGSSSATESGSASSVPSSSGSVTESGSSSSASESSITQSGTASGSSASSTSGSVTQSGSSVSGSSASSAPGISSSIPQSTSSASTASGSITSGTLSSITSSASSATATASNSLSSSDGTIYLPSTTISGDITLTGSVIATEAVEVAAGGKLTLLDGDKYVFSADFIIHGGVFVEKSKPTYPGTEFDISGENFDVSGTFNAEEPAASSASAYSFTPGSFDNSGDISLSLSESTKGEVTFSPYSNSGAFSFSNAILNGGSVSGLQRRAESGSVNNGEINLENGSTYVVVEPVSGSGTINIISGNLYLHYPDTFTGQTVVFKGEGVLAVDPTETNTTPIPVVGYTGENQIAITADVTALSYDSATGVLTATQGNSQFSFSIGTGFSSSGFNVSEGTFAGAYAYYLNYGGVVASSATPSSTSTTSGATNSTSGSTSFGASVTGSTASTSFGASVTGSTASTLISGSPSVYTTTLTYATTTSTVVVSCSETTDSNGNVYTITTTVPCSSTTATITSCDETGCHVTTSTGTVATETVSSKSYTTVTVTHCDNNGCNTKTVTSECPEETSATTTSPKSYTTVTVTHCDDNGCNTKTVTSEAPEATTTTVSPKTYTTATVTQCDDNGCSTKTVTSEAPKETSETSETSAAPKTYTTATVTQCDDNGCNVKIITSQIPEATSTVTATSASPKSYTTVTSEGSKATSLTTAISKASSAISTYSKSAAPIKTSTGIIVQSEGIAAGLNANTLNALVGIFVLAFFN.

Residues 1-23 form the signal peptide; that stretch reads MFNRFNKLQAALALVLYSQSALG. N-linked (GlcNAc...) asparagine glycans are attached at residues asparagine 28 and asparagine 35. Positions 72 to 301 are disordered; sequence SSSTEVSSSI…STSSASTASG (230 aa). A run of 9 repeats spans residues 93–105, 106–118, 119–131, 132–144, 153–165, 166–178, 179–191, 192–204, and 205–217. The segment at 93–278 is 13 X approximate repeats, Ser-rich; that stretch reads SITSSGSSVS…QSGSSVSGSS (186 aa). The stretch at 218–230 is one 1-10; approximate repeat; sequence SATESGSASSVPS. A 1-11; approximate repeat occupies 234 to 247; the sequence is SVTESGSSSSASES. Residues 248 to 259 form a 1-12; approximate repeat; the sequence is SITQSGTASGSS. The 1-13 repeat unit spans residues 266-278; it reads SVTQSGSSVSGSS. Asparagine 493, asparagine 601, and asparagine 638 each carry an N-linked (GlcNAc...) asparagine glycan. Repeat copies occupy residues 745–780, 781–815, 816–854, and 855–893. The interval 745 to 902 is 4.5 X approximate tandem repeats, Thr-rich; the sequence is SSKSYTTVTV…ASPKSYTTVT (158 aa). Positions 836-857 are disordered; it reads KTVTSEAPKETSETSETSAAPK. The 2-5; truncated repeat unit spans residues 894–902; that stretch reads SPKSYTTVT. The GPI-anchor amidated alanine moiety is linked to residue alanine 946. Residues 947–967 constitute a propeptide, removed in mature form; sequence AGLNANTLNALVGIFVLAFFN.

Belongs to the SRP1/TIP1 family. In terms of processing, the GPI-anchor is attached to the protein in the endoplasmic reticulum and serves to target the protein to the cell surface. There, the glucosamine-inositol phospholipid moiety is cleaved off and the GPI-modified mannoprotein is covalently attached via its lipidless GPI glycan remnant to the 1,6-beta-glucan of the outer cell wall layer.

The protein localises to the secreted. Its subcellular location is the cell wall. It is found in the membrane. Functionally, involved in cell wall organization and biosynthesis. In Saccharomyces cerevisiae (strain ATCC 204508 / S288c) (Baker's yeast), this protein is Haze protective factor 1 (HPF1).